The primary structure comprises 353 residues: Ig alpha-1 chain C region (353 aa).

The Ig-like 1 domain occupies 6 to 98; it reads PKVFPLSLCS…HYTNPSQDVT (93 aa). Intrachain disulfides connect Cys-26–Cys-85 and Cys-77–Cys-101. A disordered region spans residues 96 to 121; the sequence is DVTVPCRVPSTPPTPSPSTPPTPSPP. Over residues 105-121 the composition is skewed to pro residues; that stretch reads STPPTPSPSTPPTPSPP. Disulfide bonds link Cys-123–Cys-180, Cys-147–Cys-204, and Cys-250–Cys-313. Ig-like domains follow at residues 125-220 and 228-330; these read PRLS…ATLS and PEVH…KTID. A glycan (N-linked (GlcNAc...) asparagine) is linked at Asn-144. Asn-340 carries N-linked (GlcNAc...) asparagine glycosylation. Cys-352 contacts 3-hydroxy-L-kynurenine.

As to quaternary structure, monomeric or polymeric. In terms of processing, 3-Hydroxykynurenine, an oxidized tryptophan metabolite that is common in biological fluids, reacts with alpha-1-microglobulin to form heterogeneous polycyclic chromophores including hydroxanthommatin. The chromophore reacts with accessible cysteines forming non-reducible thioether cross-links with Ig alpha-1 chain C region Cys-352.

In terms of biological role, ig alpha is the major immunoglobulin class in body secretions. It may serve both to defend against local infection and to prevent access of foreign antigens to the general immunologic system. This Gorilla gorilla gorilla (Western lowland gorilla) protein is Ig alpha-1 chain C region (IGHA1).